Consider the following 259-residue polypeptide: 5'-nucleotidase SurE (259 aa).

Positions 13, 14, 44, and 100 each coordinate a divalent metal cation.

Belongs to the SurE nucleotidase family. The cofactor is a divalent metal cation.

The protein localises to the cytoplasm. It catalyses the reaction a ribonucleoside 5'-phosphate + H2O = a ribonucleoside + phosphate. Nucleotidase that shows phosphatase activity on nucleoside 5'-monophosphates. The polypeptide is 5'-nucleotidase SurE (Bacteroides thetaiotaomicron (strain ATCC 29148 / DSM 2079 / JCM 5827 / CCUG 10774 / NCTC 10582 / VPI-5482 / E50)).